The chain runs to 221 residues: Early nodulin-like protein 4 (221 aa).

Positions Met1–Phe21 are cleaved as a signal peptide. The Phytocyanin domain maps to His29–Ser130. Residues Asn59 and Asn85 are each glycosylated (N-linked (GlcNAc...) asparagine). The cysteines at positions 84 and 118 are disulfide-linked. Residues Ser130–Leu185 are disordered. Asn197 is lipidated: GPI-anchor amidated asparagine. The propeptide at Leu198–Val221 is removed in mature form.

The protein belongs to the early nodulin-like (ENODL) family. As to expression, confined to flowers.

Its subcellular location is the cell membrane. May act as a carbohydrate transporter. This chain is Early nodulin-like protein 4, found in Arabidopsis thaliana (Mouse-ear cress).